Consider the following 191-residue polypeptide: Orotate phosphoribosyltransferase (191 aa).

Residue 114 to 122 participates in 5-phospho-alpha-D-ribose 1-diphosphate binding; it reads EDVITTGGS. Thr118 and Arg146 together coordinate orotate.

Belongs to the purine/pyrimidine phosphoribosyltransferase family. PyrE subfamily. In terms of assembly, homodimer. The cofactor is Mg(2+).

The enzyme catalyses orotidine 5'-phosphate + diphosphate = orotate + 5-phospho-alpha-D-ribose 1-diphosphate. Its pathway is pyrimidine metabolism; UMP biosynthesis via de novo pathway; UMP from orotate: step 1/2. Its function is as follows. Catalyzes the transfer of a ribosyl phosphate group from 5-phosphoribose 1-diphosphate to orotate, leading to the formation of orotidine monophosphate (OMP). This Caldicellulosiruptor saccharolyticus (strain ATCC 43494 / DSM 8903 / Tp8T 6331) protein is Orotate phosphoribosyltransferase.